Here is a 154-residue protein sequence, read N- to C-terminus: Acidic phospholipase A2 1 (154 aa).

The first 19 residues, 1 to 19 (MHPAHLLVLLGVCVSLLGA), serve as a signal peptide directing secretion. Positions 20-27 (ARIPPLPL) are excised as a propeptide. 7 cysteine pairs are disulfide-bonded: C38–C104, C54–C153, C56–C72, C71–C132, C78–C125, C88–C118, and C111–C123. Ca(2+) is bound by residues F55, G57, and G59. The active site involves H75. Residue D76 participates in Ca(2+) binding. D126 is an active-site residue.

This sequence belongs to the phospholipase A2 family. Group I subfamily. D49 sub-subfamily. As to quaternary structure, monomer. Ca(2+) serves as cofactor. As to expression, expressed by the venom gland.

Its subcellular location is the secreted. The enzyme catalyses a 1,2-diacyl-sn-glycero-3-phosphocholine + H2O = a 1-acyl-sn-glycero-3-phosphocholine + a fatty acid + H(+). Its function is as follows. Snake venom phospholipase A2 (PLA2) that shows moderate enzymatic activity and exhibits procoagulant activity. PLA2 catalyzes the calcium-dependent hydrolysis of the 2-acyl groups in 3-sn-phosphoglycerides. The polypeptide is Acidic phospholipase A2 1 (Pseudonaja textilis (Eastern brown snake)).